A 241-amino-acid polypeptide reads, in one-letter code: Glucosamine-6-phosphate deaminase (241 aa).

D67 acts as the Proton acceptor; for enolization step in catalysis. The active-site For ring-opening step is N136. The active-site Proton acceptor; for ring-opening step is H138. E143 functions as the For ring-opening step in the catalytic mechanism.

Belongs to the glucosamine/galactosamine-6-phosphate isomerase family. NagB subfamily.

The enzyme catalyses alpha-D-glucosamine 6-phosphate + H2O = beta-D-fructose 6-phosphate + NH4(+). Its pathway is amino-sugar metabolism; N-acetylneuraminate degradation; D-fructose 6-phosphate from N-acetylneuraminate: step 5/5. Functionally, catalyzes the reversible isomerization-deamination of glucosamine 6-phosphate (GlcN6P) to form fructose 6-phosphate (Fru6P) and ammonium ion. The protein is Glucosamine-6-phosphate deaminase of Clostridium novyi (strain NT).